A 388-amino-acid chain; its full sequence is Deoxyguanosinetriphosphate triphosphohydrolase-like protein (388 aa).

The interval 24–44 is disordered; sequence HSAQTRGRVHAEPPSTSRTEF. The region spanning 78 to 209 is the HD domain; sequence RLTHSLEVAQ…ANLADEVAYN (132 aa).

It belongs to the dGTPase family. Type 2 subfamily.

The chain is Deoxyguanosinetriphosphate triphosphohydrolase-like protein from Ralstonia pickettii (strain 12J).